The sequence spans 245 residues: OVARIAN TUMOR DOMAIN-containing deubiquitinating enzyme 11 (245 aa).

The interval 1–37 (MDENHRNPFANASTSARASGSTSASSNSSFSSSVADT) is disordered. The segment covering 10-35 (ANASTSARASGSTSASSNSSFSSSVA) has biased composition (low complexity). Residues 101–225 (LAELQMEGDG…EVHYNSLYAN (125 aa)) form the OTU domain. The active site involves Asp109. Cys112 (nucleophile) is an active-site residue. His218 is a catalytic residue.

It belongs to the peptidase C85 family.

It carries out the reaction Thiol-dependent hydrolysis of ester, thioester, amide, peptide and isopeptide bonds formed by the C-terminal Gly of ubiquitin (a 76-residue protein attached to proteins as an intracellular targeting signal).. Its function is as follows. Hydrolase that can remove conjugated ubiquitin from proteins in vitro and may therefore play an important regulatory role at the level of protein turnover by preventing degradation. Inactive cysteine protease. The chain is OVARIAN TUMOR DOMAIN-containing deubiquitinating enzyme 11 from Arabidopsis thaliana (Mouse-ear cress).